The following is a 124-amino-acid chain: Small ribosomal subunit protein uS12 (124 aa).

Residues 1–25 form a disordered region; sequence MATINQLVRKPRQATTYKSASPALD. The residue at position 89 (Asp89) is a 3-methylthioaspartic acid.

This sequence belongs to the universal ribosomal protein uS12 family. Part of the 30S ribosomal subunit. Contacts proteins S8 and S17. May interact with IF1 in the 30S initiation complex.

With S4 and S5 plays an important role in translational accuracy. Its function is as follows. Interacts with and stabilizes bases of the 16S rRNA that are involved in tRNA selection in the A site and with the mRNA backbone. Located at the interface of the 30S and 50S subunits, it traverses the body of the 30S subunit contacting proteins on the other side and probably holding the rRNA structure together. The combined cluster of proteins S8, S12 and S17 appears to hold together the shoulder and platform of the 30S subunit. This chain is Small ribosomal subunit protein uS12, found in Stenotrophomonas maltophilia (strain R551-3).